The primary structure comprises 815 residues: Polyribonucleotide nucleotidyltransferase (815 aa).

Residues Asp-489 and Asp-495 each coordinate Mg(2+). Residues 556–615 (PRFYTLQIPTDKIRDLIGPGGKVIRGIVEATGVKIDVEDSGKVNVASSDQEAAKKALKMI) enclose the KH domain. Residues 625-692 (GKTYLGTVTR…DGNRIKLSRK (68 aa)) enclose the S1 motif domain. The disordered stretch occupies residues 700–815 (AKMATEGGGD…GGGGGGRGRG (116 aa)). Residues 723–734 (APGGVTFEGGYE) are compositionally biased toward gly residues. The span at 735-745 (GGDEPEVEEGE) shows a compositional bias: acidic residues. Residues 775 to 815 (PHGGGGGAGRGGRGRRPGGGGGGGRGGHGGRGGGGGGRGRG) show a composition bias toward gly residues.

Belongs to the polyribonucleotide nucleotidyltransferase family. It depends on Mg(2+) as a cofactor.

The protein localises to the cytoplasm. The catalysed reaction is RNA(n+1) + phosphate = RNA(n) + a ribonucleoside 5'-diphosphate. Its function is as follows. Involved in mRNA degradation. Catalyzes the phosphorolysis of single-stranded polyribonucleotides processively in the 3'- to 5'-direction. The sequence is that of Polyribonucleotide nucleotidyltransferase from Koribacter versatilis (strain Ellin345).